Consider the following 563-residue polypeptide: Endogenous retroviral envelope protein HEMO (563 aa).

The signal sequence occupies residues 1 to 26 (MGSLSNYALLQLTLTAFLTILVQPQH). At 27–488 (LLAPVFRTLS…IFAKVGDWFR (462 aa)) the chain is on the extracellular side. N-linked (GlcNAc...) asparagine glycosylation is found at Asn-122 and Asn-192. Residues 489 to 509 (SWGYVLLIVLFCLFIFVLIYV) form a helical membrane-spanning segment. Over 510–563 (RVFRKSRRSLNSQPLNLALSPQQSAQLLVSETSCQVSNRAMKGLTTHQYDTSLL) the chain is Cytoplasmic.

It belongs to the gamma type-C retroviral envelope protein family. In terms of processing, N-glycosylated. Cleaved by some metalloproteinase at 432-Gln-Arg-433 (mainly) or 433-Arg-Gln-434, leading to release the secreted form (Endogenous retroviral envelope protein HEMO, secreted form) in the extracellular medium. In terms of tissue distribution, expressed at high level in the placenta and stem cells (at protein level). Also expressed in the kidney but at a lower level. Endogenous retroviral envelope protein HEMO, secreted form: Present in the blood of pregnant women (at protein level).

It localises to the cell membrane. Its subcellular location is the secreted. Functionally, endogenous envelope proteins originate from retroviral envelope proteins, which mediate receptor recognition and membrane fusion during early infection. Endogenous envelope proteins may have kept, lost or modified their original function during evolution. This chain is Endogenous retroviral envelope protein HEMO, found in Homo sapiens (Human).